The sequence spans 290 residues: uncharacterized protein (290 aa).

Disordered stretches follow at residues 17 to 91 (QTIS…EKNS) and 220 to 259 (DKAS…QMPN). Over residues 40–50 (NITTHLSTGNL) the composition is skewed to polar residues. Residues 66-83 (STKKGKRVSKPGTKKKEK) show a composition bias toward basic residues. The segment covering 233-249 (EGEKDGNAEQGKQKEVQ) has biased composition (basic and acidic residues).

This is an uncharacterized protein from Saccharomyces cerevisiae (strain ATCC 204508 / S288c) (Baker's yeast).